A 73-amino-acid polypeptide reads, in one-letter code: Disintegrin trigramin-beta-2 (73 aa).

The region spanning 1 to 73 is the Disintegrin domain; the sequence is EAGKDCDCGS…AGCPRNPFHA (73 aa). Intrachain disulfides connect Cys-6/Cys-21, Cys-8/Cys-16, Cys-15/Cys-38, Cys-29/Cys-35, Cys-34/Cys-59, and Cys-47/Cys-66. The short motif at 51–53 is the Cell attachment site element; the sequence is RGD.

This sequence belongs to the venom metalloproteinase (M12B) family. P-II subfamily. P-IIa sub-subfamily. Monomer (disintegrin). As to expression, expressed by the venom gland.

Its subcellular location is the secreted. Inhibits fibrinogen interaction with platelets. Acts by binding to the alpha-IIb/beta-3 receptor (ITGA2B/ITGB3) on the platelet surface and inhibits aggregation induced by ADP, thrombin, platelet-activating factor and collagen. This Craspedocephalus gramineus (Bamboo pit viper) protein is Disintegrin trigramin-beta-2.